We begin with the raw amino-acid sequence, 123 residues long: Cytochrome c-555 (123 aa).

Residues 1–27 (MDHKKTSIRTTALAALVLGAVAAPAFS) form the signal peptide. Heme c contacts are provided by Cys46, Cys49, His50, and Met86.

In terms of processing, binds 1 heme c group covalently per subunit.

This chain is Cytochrome c-555, found in Methylococcus capsulatus (strain ATCC 33009 / NCIMB 11132 / Bath).